Consider the following 193-residue polypeptide: Putative 3-methyladenine DNA glycosylase (193 aa).

It belongs to the DNA glycosylase MPG family.

This is Putative 3-methyladenine DNA glycosylase from Nitrosospira multiformis (strain ATCC 25196 / NCIMB 11849 / C 71).